The chain runs to 407 residues: 4-hydroxy-3-methylbut-2-en-1-yl diphosphate synthase (flavodoxin) (407 aa).

4 residues coordinate [4Fe-4S] cluster: cysteine 296, cysteine 299, cysteine 342, and glutamate 349.

It belongs to the IspG family. The cofactor is [4Fe-4S] cluster.

The catalysed reaction is (2E)-4-hydroxy-3-methylbut-2-enyl diphosphate + oxidized [flavodoxin] + H2O + 2 H(+) = 2-C-methyl-D-erythritol 2,4-cyclic diphosphate + reduced [flavodoxin]. It participates in isoprenoid biosynthesis; isopentenyl diphosphate biosynthesis via DXP pathway; isopentenyl diphosphate from 1-deoxy-D-xylulose 5-phosphate: step 5/6. In terms of biological role, converts 2C-methyl-D-erythritol 2,4-cyclodiphosphate (ME-2,4cPP) into 1-hydroxy-2-methyl-2-(E)-butenyl 4-diphosphate. The sequence is that of 4-hydroxy-3-methylbut-2-en-1-yl diphosphate synthase (flavodoxin) from Methylococcus capsulatus (strain ATCC 33009 / NCIMB 11132 / Bath).